We begin with the raw amino-acid sequence, 912 residues long: Protein translocase subunit SecA (912 aa).

Residues glutamine 87, 105–109, and aspartate 499 each bind ATP; that span reads GEGKT. Zn(2+) is bound by residues cysteine 897, cysteine 899, cysteine 908, and histidine 909.

The protein belongs to the SecA family. In terms of assembly, monomer and homodimer. Part of the essential Sec protein translocation apparatus which comprises SecA, SecYEG and auxiliary proteins SecDF-YajC and YidC. It depends on Zn(2+) as a cofactor.

Its subcellular location is the cell inner membrane. The protein resides in the cytoplasm. It carries out the reaction ATP + H2O + cellular proteinSide 1 = ADP + phosphate + cellular proteinSide 2.. In terms of biological role, part of the Sec protein translocase complex. Interacts with the SecYEG preprotein conducting channel. Has a central role in coupling the hydrolysis of ATP to the transfer of proteins into and across the cell membrane, serving both as a receptor for the preprotein-SecB complex and as an ATP-driven molecular motor driving the stepwise translocation of polypeptide chains across the membrane. In Rhizorhabdus wittichii (strain DSM 6014 / CCUG 31198 / JCM 15750 / NBRC 105917 / EY 4224 / RW1) (Sphingomonas wittichii), this protein is Protein translocase subunit SecA.